The primary structure comprises 408 residues: S100P-binding protein (408 aa).

3 disordered regions span residues 1 to 111, 162 to 234, and 271 to 291; these read MMCS…AETP, KDET…SENP, and VSTS…MKGH. Over residues 28–59 the composition is skewed to acidic residues; that stretch reads SLDEDGLDDSLLELSEGEEDDGDVNYTEEEID. Basic and acidic residues-rich tracts occupy residues 77–86 and 162–185; these read DGGHVEKGER and KDET…REDG. At serine 187 the chain carries Phosphoserine. A compositionally biased stretch (polar residues) spans 188–234; that stretch reads PNESKLCTESEGISPNNSAWNGPQLSSSNNNFQQTVSDKNMPDSENP. The span at 280 to 291 shows a compositional bias: basic and acidic residues; sequence VLNKDSGKMKGH.

Interacts with S100P. Expressed in brain, spleen, and lung. Not detected in pancreas or liver. In pancreas, expressed predominantly in islet cells and to a lesser extent in acinar cells, but not expressed in ductal cells. Up-regulated in various pancreatic ductal adenocarcinomas and pancreatic intraepithelial neoplasias. Detected in pancreatic ductal adenocarcinoma cells (at protein level). Not detected in non-neoplastic ductal epithelium (at protein level).

It localises to the nucleus. This Homo sapiens (Human) protein is S100P-binding protein.